The following is an 851-amino-acid chain: Protein NUD1 (851 aa).

Disordered stretches follow at residues 1–31 (MDMD…NAHS) and 216–352 (LVGS…KAPS). Residues 8-21 (AELSSQLENLTINS) are compositionally biased toward polar residues. Composition is skewed to low complexity over residues 223–246 (NSNN…INNK) and 260–278 (SNSF…QTQS). Residues 291–304 (NTISPGQLGYQFNH) are compositionally biased toward polar residues. Residues 320–333 (SSSHSLDNTSSNQS) show a composition bias toward low complexity. Residue K357 forms a Glycyl lysine isopeptide (Lys-Gly) (interchain with G-Cter in ubiquitin) linkage. Phosphothreonine occurs at positions 388 and 392. S417 and S419 each carry phosphoserine. LRR repeat units lie at residues 544-566 (DLEC…SLCH), 567-588 (HLQE…GSSR), 589-609 (MKKL…EQLI), 621-642 (TVEV…NCLP), and 643-664 (RLKV…SKME).

In terms of assembly, interacts directly with MPC54, CNM67, SPO21/MPC70, ADY3 and ADY4. Probable component of a spindle pole boby (SPB) complex composed of ADY3, SSP1, DON1, MPC54, SPO21/MPC70, NUD1 and CNM67. Phosphorylated from S/G2 phase until the end of mitosis.

The protein localises to the cytoplasm. The protein resides in the cytoskeleton. It localises to the microtubule organizing center. It is found in the spindle pole body. Its subcellular location is the nucleus envelope. Functionally, involved in astral microtubule organization by binding SCP72 to the outer plaque in a cell-cycle dependent manner. Required for the mitotic exit by facilitating the binding of TEMP1 to CDC15. Also involved in the pathway that organizes the shaping and sizing of the prospore membrane (PSM) during sporulation. In Saccharomyces cerevisiae (strain ATCC 204508 / S288c) (Baker's yeast), this protein is Protein NUD1 (NUD1).